The following is a 158-amino-acid chain: Small ribosomal subunit protein uS9 (158 aa).

Belongs to the universal ribosomal protein uS9 family.

The polypeptide is Small ribosomal subunit protein uS9 (Nitrobacter hamburgensis (strain DSM 10229 / NCIMB 13809 / X14)).